Here is a 342-residue protein sequence, read N- to C-terminus: tRNA dimethylallyltransferase (342 aa).

The segment at 1–30 (MSANGPAAEPADGGRAVPAGGGEAVPAGGG) is disordered. Over residues 19-30 (AGGGEAVPAGGG) the composition is skewed to gly residues. An ATP-binding site is contributed by 49-56 (GPTAAGKS). 51 to 56 (TAAGKS) is a substrate binding site. An interaction with substrate tRNA region spans residues 74 to 77 (DSMQ).

It belongs to the IPP transferase family. In terms of assembly, monomer. The cofactor is Mg(2+).

The catalysed reaction is adenosine(37) in tRNA + dimethylallyl diphosphate = N(6)-dimethylallyladenosine(37) in tRNA + diphosphate. Catalyzes the transfer of a dimethylallyl group onto the adenine at position 37 in tRNAs that read codons beginning with uridine, leading to the formation of N6-(dimethylallyl)adenosine (i(6)A). The protein is tRNA dimethylallyltransferase of Salinispora arenicola (strain CNS-205).